The chain runs to 342 residues: MQALNTTSLTLSDNRLLILDQQALPQEKQWRSCDSVEELVDHILTLRVRGAPLIGLSASLLLALLAERGVPRKELEQALITLRASRPTAVNLMNNLDRMKLALAQPQWVPAMVEEAQRLVEEDRKLCDRIADHGAGLVKPGSRLLTHCNTGGLATAGIGTAIGVLLRAHQQGKVQQVWVDETRPLLQGGRLTAWELGELGIPYRLICDSMAASLMAQGQVDAVWVGADRIAANGDVANKIGTYSLAVLAHYHRIPFYVAAPHTTHDPHCPNGAAIAIEQRAAVEVTGVTGSFGSCQWAPVDAPVYNPAFDVTPAALISGWVFDSGVITPQQVSEGIFQRALG.

Substrate contacts are provided by residues 49–51 (RGA), Arg86, and Gln187. Asp228 serves as the catalytic Proton donor. 238–239 (NK) serves as a coordination point for substrate.

This sequence belongs to the eIF-2B alpha/beta/delta subunits family. MtnA subfamily.

It carries out the reaction 5-(methylsulfanyl)-alpha-D-ribose 1-phosphate = 5-(methylsulfanyl)-D-ribulose 1-phosphate. It participates in amino-acid biosynthesis; L-methionine biosynthesis via salvage pathway; L-methionine from S-methyl-5-thio-alpha-D-ribose 1-phosphate: step 1/6. Functionally, catalyzes the interconversion of methylthioribose-1-phosphate (MTR-1-P) into methylthioribulose-1-phosphate (MTRu-1-P). The polypeptide is Methylthioribose-1-phosphate isomerase (Serratia proteamaculans (strain 568)).